Reading from the N-terminus, the 386-residue chain is Zinc finger CCCH domain-containing protein 39 (386 aa).

Positions 1 to 90 (MDSSYSDSRP…SSSNPWMVPS (90 aa)) are disordered. Residues 20-37 (WNQTQMIDSMANPMNNEQ) are compositionally biased toward polar residues. Residues 43–58 (LSESQSQSQPSQQLQP) show a composition bias toward low complexity. A compositionally biased stretch (polar residues) spans 72–85 (NPASSFPQPSSSNP). The C3H1-type 1 zinc finger occupies 104 to 131 (FYKTRMCAKFRAGTCRNGELCNFAHGIE). The interval 136-166 (PPSNWQEIVGPPPAGQDRERERERERERERP) is disordered. Residues 151 to 166 (QDRERERERERERERP) are compositionally biased toward basic and acidic residues. 2 C3H1-type zinc fingers span residues 183–211 (ILRMKLCRKFCFGEECPYGDRCNFIHEDL) and 269–297 (YWKTRLCMKFDITGQCPFGDKCHFAHGQA).

This is Zinc finger CCCH domain-containing protein 39 from Arabidopsis thaliana (Mouse-ear cress).